The following is a 165-amino-acid chain: Nascent polypeptide-associated complex subunit beta (165 aa).

In terms of domain architecture, NAC-A/B spans 33–97 (TTDDKRLQST…PQTKKLQDIL (65 aa)). The disordered stretch occupies residues 120–165 (QKQAPGAGDVPATIQEEDDDDDVPDLVVGETFETPATEEAPKAAAS). Positions 134-143 (QEEDDDDDVP) are enriched in acidic residues. Over residues 144–165 (DLVVGETFETPATEEAPKAAAS) the composition is skewed to low complexity.

This sequence belongs to the NAC-beta family. In terms of assembly, part of the nascent polypeptide-associated complex (NAC).

In Arabidopsis thaliana (Mouse-ear cress), this protein is Nascent polypeptide-associated complex subunit beta.